Here is a 384-residue protein sequence, read N- to C-terminus: MSVVGIVAEYNPFHSGHEFLMNQARLIAGDDPIIAVMSGNYVQRGEMAILDKWSRARSAIEAGADLVFELPFSYAVQAADMFATGGVDLLTRLGAKNLVFGVEDANLNFEYFGDRISKIPRQRQEFADYSQTYSTQYNQMVAREIGHEVSEPNAILGLAYAVANANLGSPLKLSPVNRVGAGHDEILQREAVVQSASAIRNLLLNGAERSELEQWLPKGEIAAFDQEKVLPNWELLFPFLKYRLESASIKELQQIYQMSEGLEYKFKAEIHLAENFADFLRRVKSKRYTYSRLRRLSLYTLLNVTEADVLNSYDHVSTMLLAYSKRGRKYLKQQRKDFEIDIVSKVDRKNAQEGTLGLKVRVDRLFEQIVGADQNFGRRPLEVN.

ATP-binding positions include 7–20 (VAEY…HEFL), Gly101, Asn153, and Arg178.

This sequence belongs to the TmcAL family.

Its subcellular location is the cytoplasm. The catalysed reaction is cytidine(34) in elongator tRNA(Met) + acetate + ATP = N(4)-acetylcytidine(34) in elongator tRNA(Met) + AMP + diphosphate. Catalyzes the formation of N(4)-acetylcytidine (ac(4)C) at the wobble position of elongator tRNA(Met), using acetate and ATP as substrates. First activates an acetate ion to form acetyladenylate (Ac-AMP) and then transfers the acetyl group to tRNA to form ac(4)C34. This is tRNA(Met) cytidine acetate ligase from Lactobacillus delbrueckii subsp. bulgaricus (strain ATCC 11842 / DSM 20081 / BCRC 10696 / JCM 1002 / NBRC 13953 / NCIMB 11778 / NCTC 12712 / WDCM 00102 / Lb 14).